Consider the following 61-residue polypeptide: UPF0434 protein PST_2635 (61 aa).

This sequence belongs to the UPF0434 family.

The protein is UPF0434 protein PST_2635 of Stutzerimonas stutzeri (strain A1501) (Pseudomonas stutzeri).